The following is a 340-amino-acid chain: Adenosine kinase (340 aa).

Residue D293 is part of the active site.

The protein belongs to the carbohydrate kinase PfkB family. Mg(2+) serves as cofactor.

The enzyme catalyses adenosine + ATP = AMP + ADP + H(+). Its pathway is purine metabolism; AMP biosynthesis via salvage pathway; AMP from adenosine: step 1/1. In terms of biological role, ATP dependent phosphorylation of adenosine and other related nucleoside analogs to monophosphate derivatives. ADO1 does not play a major role in adenine utilization in yeast. Its physiological role could primarily be to recycle adenosine produced by the methyl cycle. This is Adenosine kinase from Saccharomyces cerevisiae (strain ATCC 204508 / S288c) (Baker's yeast).